Here is an 859-residue protein sequence, read N- to C-terminus: MDSIVTEVTYGLEIKKIKDITELPFPVRQDSPLTEVLPTDLKTKDNFVARDPDLLRLTGSHPFNSEPPLTKLYDSGFLTPVSLHFVRNHGPVPYVPDENILDWEVSIEGMVETPYKIKLSDIMEQFDIYSTPVTMVCAGNRRKEQNMVKKGAGFNWGAAGTSTSLWTGCMLGDVIGKARPSKRARFVWMEGADNPANGAYRTCIRLSWCMDPERCIMIAYQQNGEWLHPDHGKPLRVVIPGVIGGRSVKWLKKLVVSDRPSENWYHYFDNRVLPTMVTPEMAKSDDRWWKDERYAIYDLNLQTIICKPENQQVIKISEDEYEIAGFGYNGGGVRIGRIEVSLDKGKSWKLADIDYPEDRYREAGYFRLFGGLVNVCDRMSCLCWCFWKLKVPLSELARSKDILIRGMDERMMVQPRTMYWNVTSMLNNWWYRVAIIREGESLRFEHPVVANKPGGWMDRVKAEGGDILDNNWGEVDDTVKQAERRPHIDEDLEMMCNREKMDVVIKYSEFEAHKDSETEPWFAVKGQVFDGSSYLEDHPGGAQSILMVSGEDATDDFIAIHSSFAKKLLPSMHLGRLEEVSSVTKVKSVEQNVKREVLLDPRKWHKITLAEKEVISSDSRIFKFDLEHSEQLSGLPTGKHLFLRLKDSSGKYVMRAYTPKSSNSLRGRLEILIKVYFPNREYPNGGIMTNLIENLQVGNQIEVKGPVGEFEYVKCGHCSFNNKPYQMKHFVMISGGSGITPTYQVLQAIFSDPEDRTSVQLFFGNKKVDDILLREELDHIQEKYPEQFKVDYSLSDLDHLPENWSGVRGRLTFDILDTYVRGKKMGEYMLLVCGPPGMNGVVENWCNARKLDKQYVVYF.

Cysteine 137 lines the Mo-molybdopterin pocket. The Cytochrome b5 heme-binding domain maps to 502–578 (DVVIKYSEFE…LPSMHLGRLE (77 aa)). Heme-binding residues include histidine 538 and histidine 561. One can recognise an FAD-binding FR-type domain in the interval 602 to 713 (RKWHKITLAE…KGPVGEFEYV (112 aa)). Residues 655–658 (RAYT), 672–676 (LIKVY), phenylalanine 677, 687–689 (IMT), serine 737, and threonine 740 contribute to the FAD site. 829-838 (MLLVCGPPGM) provides a ligand contact to NADP(+).

This sequence belongs to the nitrate reductase family. Homodimer. FAD is required as a cofactor. Requires heme as cofactor. The cofactor is Mo-molybdopterin.

It carries out the reaction nitrite + NADP(+) + H2O = nitrate + NADPH + H(+). Functionally, nitrate reductase is a key enzyme involved in the first step of nitrate assimilation in plants, fungi and bacteria. This is Nitrate reductase [NADPH] (YNR1) from Pichia angusta (Yeast).